We begin with the raw amino-acid sequence, 321 residues long: MNRPERLQPGVKLRDADKVSRIPVKIVPSERDTMLRKPDWLRVKLPASNQRILEIKQALRKNGLHSVCEEASCPNLAECFNHGTATFMILGAICTRRCPFCDVAHGRPLKPDAEEPVKLAQTIRDMKLKYVVITSVDRDDLRDGGAQHFADCIREIRKLNPDIKIETLVPDFRGRIDAALDILSTEPPDVFNHNLETAPMHYRKARPGANYQWSLDLLKRFKERHPNVPTKSGLMMGLGETNDEIAQVLRDLRAHKVEMLTLGQYLQPSKFHLPVERYVPPAEFDELKALADELGFTHAACGPLVRSSYHADLQAQGKEVK.

[4Fe-4S] cluster contacts are provided by cysteine 68, cysteine 73, cysteine 79, cysteine 94, cysteine 98, cysteine 101, and serine 308. The 218-residue stretch at 80–297 (FNHGTATFMI…KALADELGFT (218 aa)) folds into the Radical SAM core domain.

The protein belongs to the radical SAM superfamily. Lipoyl synthase family. It depends on [4Fe-4S] cluster as a cofactor.

The protein localises to the cytoplasm. It carries out the reaction [[Fe-S] cluster scaffold protein carrying a second [4Fe-4S](2+) cluster] + N(6)-octanoyl-L-lysyl-[protein] + 2 oxidized [2Fe-2S]-[ferredoxin] + 2 S-adenosyl-L-methionine + 4 H(+) = [[Fe-S] cluster scaffold protein] + N(6)-[(R)-dihydrolipoyl]-L-lysyl-[protein] + 4 Fe(3+) + 2 hydrogen sulfide + 2 5'-deoxyadenosine + 2 L-methionine + 2 reduced [2Fe-2S]-[ferredoxin]. The protein operates within protein modification; protein lipoylation via endogenous pathway; protein N(6)-(lipoyl)lysine from octanoyl-[acyl-carrier-protein]: step 2/2. Catalyzes the radical-mediated insertion of two sulfur atoms into the C-6 and C-8 positions of the octanoyl moiety bound to the lipoyl domains of lipoate-dependent enzymes, thereby converting the octanoylated domains into lipoylated derivatives. In Shewanella baltica (strain OS185), this protein is Lipoyl synthase.